The chain runs to 1390 residues: MSQKSNFFQKRYSPTATRRYYGKIETNFIQPNLADIQIKSYQKFLDHDLEKLIASYFPIKSPNDRYTINFRGLHRTEPERDEAQSRAQSKTYEVGIYADLELVDNDKGTVKKARKSKKNIASNTNGVFLASMPLITHDGVFIINGIEKFVISQITRSPGIYMLTKSQLKLSNSRKRVQEGYVCEVLPANGSVMLIYISNKKKIEDAFVQILLRDAVREGAKIFPITTLLKAFGLNNREILKIFKNNEFIKRSLEAEIYNAKDFLSNVDPEIKNLLKEFRDGKTDLRRKGIASDQKLRSLVNEYVTLEKQYNALKQTSPNDSSLTALELEMENKMDSVITERAAKHIVNELSISLRDIENTEECHEVSFHALLCARFFRNKRYNLSNAGRYKVSRKLRLTERIYQKTLACDLFLKDGKLLLKKGTLLLKEEIDKIKQAAKNNEISFVNKMQLTTDGKAVDLAKESLFYETIDVYITNDNLSVSVPVIGIHNENDLNKAMTLSDFIASISYVINLPYGIGKYDDIDHLGNKRVKLINELITAKLESGFTRMERFLKEKLTIADGVNRGQQINEEGQVIEQGEKKELTIKSLINSKPIQIVIKDFFNTHQLTQFLDHQNPLSELSNKRRISAMGPGGISREDPNLDIRDVHYSQYGRICPIETPEGMNIGLIMSLASFAKIDENGFLMAPYRKIKAGVITDEVEYLTALREDEHIIAEISSLVNISNDNKILDKEIIGRYRSMQGLYDPLKIDYIDVAPHQVVSIGSSLIPFLENDDSARALMGTNMQRQAYPLIKPYAPAVGTGQEHKIASDSGLTMSSPCSGVVSYVDNSKIIITSDSSKKETVNLVKFERSNQNTCYNHKPIVEIGQRVNKDEIIVDGPAVNKSELALGQNVLVAFTTWNGYNYEDAIVISERLVKEDILTSLTINEYVAQCLSTKNGDEQITRDIPNVSDANKRYLDENGIIMVGAEVKEGDVLVGKVSPKGQVEVSPEEKLFKAIFPESVQNVRDSSLKVSHGGDGIVSAVKRFSIANGDELNDGVIEMIKVYVVQKRKIQIGDKLAGRHGNKGVISKVVPIEDMPHLEDGTPVDILLNPLGVPSRMNIGQIFETHLGYAAHKLAVRSLISSCFDQNKAKEFAIEINQPQARVERLIKGLKNQINDRNIKSEKEALEKLDNSDISLVLKEIGMSFDDLIYKIATPIFQGVNFLDLQDVMQEAGLDPQKNQGKFKLIDGRSGMPFERPISLGIMYMMKLNHMVDDKIHARAVGPYSKITQQPLGGKSQNGGQRFGEMEVWALEAYGAAYNLQELLTIKSDDVQGRNRAYAAIVKGAAFPEPGIPESFKLLTKELQGLALSVSFIYDDNTQQDSNNVSILQSDGEQDEFFNDFEFDTEGY.

Belongs to the RNA polymerase beta chain family. The RNAP catalytic core consists of 2 alpha, 1 beta, 1 beta' and 1 omega subunit. When a sigma factor is associated with the core the holoenzyme is formed, which can initiate transcription.

The catalysed reaction is RNA(n) + a ribonucleoside 5'-triphosphate = RNA(n+1) + diphosphate. In terms of biological role, DNA-dependent RNA polymerase catalyzes the transcription of DNA into RNA using the four ribonucleoside triphosphates as substrates. This Mycoplasma genitalium (strain ATCC 33530 / DSM 19775 / NCTC 10195 / G37) (Mycoplasmoides genitalium) protein is DNA-directed RNA polymerase subunit beta.